The sequence spans 497 residues: Solute carrier family 2, facilitated glucose transporter member 6 (497 aa).

The Cytoplasmic segment spans residues 1 to 36 (MQEPLLRTEGLDYDTFPEVPATPGERERAGALKNRR). The short motif at 5 to 6 (LL) is the Dileucine internalization motif element. A helical transmembrane segment spans residues 37-57 (VFLATFAAVLGNFSFGYALVY). The Extracellular portion of the chain corresponds to 58–80 (TSPVIPELKLSSDPALHLDKIQA). The chain crosses the membrane as a helical span at residues 81–101 (SWFGSVFTLGAAAGGLSAMLL). Residues 102-115 (NDLLGRKLSIMFSA) are Cytoplasmic-facing. Residues 116–136 (VPSAIGYAIMAGARGLWMLLL) form a helical membrane-spanning segment. At 137–138 (GR) the chain is on the extracellular side. Residues 139–159 (MLTGFAGGLTAACIPVYVSEI) form a helical membrane-spanning segment. Residues 160–171 (APPDVRGALGAT) are Cytoplasmic-facing. A helical transmembrane segment spans residues 172 to 192 (PQLMAVFGSLSLYALGLLLPW). Q173 provides a ligand contact to a D-hexose. R193 is a topological domain (extracellular). The chain crosses the membrane as a helical span at residues 194–214 (WLAVAGEGPVLIMILLLSFMP). Residues 215-273 (NSPRFLLSKSRDEEALQALTWLRADSEVHWEFEQIQDNVRRQSSRVSWAEAREPRVYRP) lie on the Cytoplasmic side of the membrane. A helical membrane pass occupies residues 274 to 294 (VLIAVLMRFLQQLTGITPILV). An a D-hexose-binding site is contributed by 284 to 285 (QQ). At 295–312 (YLQTIFDNTSVVLPSQQD) the chain is on the extracellular side. Residue N302 is glycosylated (N-linked (GlcNAc...) asparagine). The helical transmembrane segment at 313 to 333 (AAIVGAVRLLSVLIAAVTMDL) threads the bilayer. Residues 334-337 (AGRK) lie on the Cytoplasmic side of the membrane. Residues 338–358 (VLLYVSASVMFAANLTLGLYV) form a helical membrane-spanning segment. Residues 359 to 385 (QFVPRPLTPNSTVEIVTLGDTAFNYLT) lie on the Extracellular side of the membrane. The N-linked (GlcNAc...) asparagine glycan is linked to N368. A helical membrane pass occupies residues 386–406 (LIPLLATMLFIMGYAMGWGPI). Residues 407-425 (TWLLMSEVLPLRARGVASG) lie on the Cytoplasmic side of the membrane. W408 contributes to the a D-hexose binding site. The chain crosses the membrane as a helical span at residues 426–446 (LCVLVSWLTAFVLTNYFLLAV). N447 is a topological domain (extracellular). A helical membrane pass occupies residues 448 to 468 (AFGLQVPFFFFSAICLLSLLF). Topologically, residues 469–497 (TGCCVPETRGRSLEQIEAFFHTRRMSFRP) are cytoplasmic.

Belongs to the major facilitator superfamily. Sugar transporter (TC 2.A.1.1) family. In terms of tissue distribution, mainly expressed in brain and spleen. Also expressed in lung, heart, muscle, liver, kidney, fat, whole blood, testes, ovaries and uterus.

The protein resides in the lysosome membrane. Probable sugar transporter that acts as a regulator of glycolysis in macrophages. Does not transport glucose. The sequence is that of Solute carrier family 2, facilitated glucose transporter member 6 from Mus musculus (Mouse).